Reading from the N-terminus, the 568-residue chain is Protein yellow (568 aa).

The signal sequence occupies residues 1-28; it reads MHAQDKGGVLPGLSLLLIAVAMVCPSQA. 2 N-linked (GlcNAc...) asparagine glycosylation sites follow: Asn151 and Asn222.

The protein belongs to the major royal jelly protein family.

It is found in the secreted. Its function is as follows. Controls the pigmentation pattern of the adult cuticle and larval mouth parts. The sequence is that of Protein yellow (y) from Drosophila guanche (Fruit fly).